We begin with the raw amino-acid sequence, 593 residues long: Potassium channel KAT6 (593 aa).

Over 1–33 the chain is Cytoplasmic; sequence MAASRSELLRPAFGEPSPSLGPFVVNPHTCSYR. Residues 34–54 form a helical membrane-spanning segment; it reads WWQKFLIVLVLYTAWASPFEL. The Extracellular segment spans residues 55 to 64; it reads AMEKSASAAL. A helical transmembrane segment spans residues 65 to 85; that stretch reads AVTELVVDAFFAVDIAVSFFV. Topologically, residues 86 to 106 are cytoplasmic; that stretch reads AYRDASTGLLVTDRKKIATRH. A helical membrane pass occupies residues 107–129; sequence LARPCLALDVASTIPLQMIYRIV. Residues 130-138 lie on the Extracellular side of the membrane; sequence SGKRQALYG. Residues 139-159 traverse the membrane as a helical; Voltage-sensor segment; that stretch reads LLNLLRLWRLRRVSKLFARLE. At 160–173 the chain is on the cytoplasmic side; sequence KDIRFSYLWTRLIK. Residues 174–194 traverse the membrane as a helical segment; sequence LLYVTLFAVHFASCIYLWMAF. Topologically, residues 195–221 are extracellular; sequence HHKAKELTWIGSQFHGFEDRSVWFCYT. The pore-forming intramembrane region spans 222–241; the sequence is CAVYWSITTLATVGYGDLHA. The Extracellular portion of the chain corresponds to 242–247; it reads ANTGEM. A helical transmembrane segment spans residues 248–268; it reads LFSIAFMLFNMGLTSYIIGNI. Residues 269–593 lie on the Cytoplasmic side of the membrane; sequence TNLVVHETTN…RDGDHLFFSW (325 aa). 350–470 contacts a nucleoside 3',5'-cyclic phosphate; that stretch reads LFQGVSDKLV…VVVFSNFVLY (121 aa). In terms of domain architecture, KHA spans 522–593; that stretch reads RVSIHEHLLN…RDGDHLFFSW (72 aa).

Belongs to the potassium channel family. Plant (TC 1.A.1.4) subfamily.

Its subcellular location is the membrane. Its function is as follows. Probable inward-rectifying potassium channel. Assuming opened or closed conformations in response to the voltage difference across the membrane, the channel is activated by hyperpolarization. The polypeptide is Potassium channel KAT6 (Oryza sativa subsp. japonica (Rice)).